We begin with the raw amino-acid sequence, 418 residues long: Equilibrative nucleotide transporter 3 (418 aa).

Helical transmembrane passes span 20-40 (MVVCCILGIGSLVSWNSMLTI), 56-76 (VLTLVYQPFALGTILILAYHE), 86-106 (LIGYILFTISTFLLIVLDLAT), 112-132 (IGPYIGLCAVVASFGLADATV), 142-162 (LMCPELVQSFMGGLAVSGALT), 186-206 (MFLAISTCIELLCVFLYAYVF), 264-284 (YAVNLFLIYVCTLSIFPGFLY), 291-311 (GLGDWYALVLVAMYNCWDLVG), 326-346 (KLITIAVLSRYLLIPAFYFTA), 353-373 (WMIMLISVLGLTNGHLTVCIM), and 392-412 (LVIFLLGGIFAGVALDWLWLI).

It belongs to the SLC29A/ENT transporter (TC 2.A.57) family. In terms of tissue distribution, expressed in root tips, vasculature of roots and leaves, and meristems of leaf primordia. Expressed in flowers and siliques.

The protein resides in the cell membrane. In terms of biological role, nucleoside transporter that functions as a pyrimidine nucleoside carrier in all organs. Has high affinity for adenosine and uridine when expressed in a heterologous system (yeast). Mediates proton-dependent adenosine or uridine transport in Xenopus oocytes. The chain is Equilibrative nucleotide transporter 3 from Arabidopsis thaliana (Mouse-ear cress).